The sequence spans 144 residues: Cytochrome c oxidase subunit 4 isoform 1, mitochondrial (144 aa).

Residues 1–73 (SVVKSEDYAL…SFAEMNRGSN (73 aa)) are Mitochondrial matrix-facing. Lysine 4 carries the N6-acetyllysine; alternate modification. Lysine 4 carries the post-translational modification N6-succinyllysine; alternate. Phosphoserine occurs at positions 31 and 33. Lysine 35 is subject to N6-acetyllysine; alternate. The residue at position 35 (lysine 35) is an N6-succinyllysine; alternate. Lysine 42 is modified (N6-acetyllysine). Residues 74–99 (EWKTVVGAAMFFIGFTAILIILEKRY) form a helical membrane-spanning segment. Over 100–144 (VYGPLPHTFDKEWVAMQTKRMLDLKVNPVDGLASKWDYDKKEWKK) the chain is Mitochondrial intermembrane.

The protein belongs to the cytochrome c oxidase IV family. As to quaternary structure, component of the cytochrome c oxidase (complex IV, CIV), a multisubunit enzyme composed of 14 subunits. The complex is composed of a catalytic core of 3 subunits MT-CO1, MT-CO2 and MT-CO3, encoded in the mitochondrial DNA, and 11 supernumerary subunits COX4I, COX5A, COX5B, COX6A, COX6B, COX6C, COX7A, COX7B, COX7C, COX8 and NDUFA4, which are encoded in the nuclear genome. The complex exists as a monomer or a dimer and forms supercomplexes (SCs) in the inner mitochondrial membrane with NADH-ubiquinone oxidoreductase (complex I, CI) and ubiquinol-cytochrome c oxidoreductase (cytochrome b-c1 complex, complex III, CIII), resulting in different assemblies (supercomplex SCI(1)III(2)IV(1) and megacomplex MCI(2)III(2)IV(2)). Interacts with PHB2; the interaction decreases in absence of SPHK2. Interacts with AFG1L. Interacts with ABCB7; this interaction allows the regulation of cellular iron homeostasis and cellular reactive oxygen species (ROS) levels in cardiomyocytes. Interacts with FLVCR2; this interaction occurs in the absence of heme and is disrupted upon heme binding. Interacts with IRGC.

It is found in the mitochondrion inner membrane. The protein operates within energy metabolism; oxidative phosphorylation. Functionally, component of the cytochrome c oxidase, the last enzyme in the mitochondrial electron transport chain which drives oxidative phosphorylation. The respiratory chain contains 3 multisubunit complexes succinate dehydrogenase (complex II, CII), ubiquinol-cytochrome c oxidoreductase (cytochrome b-c1 complex, complex III, CIII) and cytochrome c oxidase (complex IV, CIV), that cooperate to transfer electrons derived from NADH and succinate to molecular oxygen, creating an electrochemical gradient over the inner membrane that drives transmembrane transport and the ATP synthase. Cytochrome c oxidase is the component of the respiratory chain that catalyzes the reduction of oxygen to water. Electrons originating from reduced cytochrome c in the intermembrane space (IMS) are transferred via the dinuclear copper A center (CU(A)) of subunit 2 and heme A of subunit 1 to the active site in subunit 1, a binuclear center (BNC) formed by heme A3 and copper B (CU(B)). The BNC reduces molecular oxygen to 2 water molecules using 4 electrons from cytochrome c in the IMS and 4 protons from the mitochondrial matrix. This is Cytochrome c oxidase subunit 4 isoform 1, mitochondrial (COX4I1) from Aotus azarae (Azara's night monkey).